The chain runs to 425 residues: Phosphoribosylamine--glycine ligase (425 aa).

Residues 107-312 (KDLCARYNIP…LLVLLNAAVD (206 aa)) enclose the ATP-grasp domain. 133 to 193 (VDQTGAPIVI…EEFMTGEEAS (61 aa)) contributes to the ATP binding site. Residues 214 to 233 (RVGDGDVGPNTGGMGAYSPA) are disordered. Mg(2+) is bound by residues Glu-282 and Asn-284.

The protein belongs to the GARS family. Mg(2+) is required as a cofactor. Mn(2+) serves as cofactor.

The catalysed reaction is 5-phospho-beta-D-ribosylamine + glycine + ATP = N(1)-(5-phospho-beta-D-ribosyl)glycinamide + ADP + phosphate + H(+). The protein operates within purine metabolism; IMP biosynthesis via de novo pathway; N(1)-(5-phospho-D-ribosyl)glycinamide from 5-phospho-alpha-D-ribose 1-diphosphate: step 2/2. The sequence is that of Phosphoribosylamine--glycine ligase from Mesorhizobium japonicum (strain LMG 29417 / CECT 9101 / MAFF 303099) (Mesorhizobium loti (strain MAFF 303099)).